The sequence spans 269 residues: Eukaryotic translation initiation factor 3 subunit G-1 (269 aa).

The RRM domain occupies 188 to 266; it reads AAIRISNLSE…LILSVEWSKP (79 aa).

This sequence belongs to the eIF-3 subunit G family. As to quaternary structure, component of the eukaryotic translation initiation factor 3 (eIF-3) complex. The eIF-3 complex interacts with pix.

The protein resides in the cytoplasm. Functionally, RNA-binding component of the eukaryotic translation initiation factor 3 (eIF-3) complex, which is involved in protein synthesis of a specialized repertoire of mRNAs and, together with other initiation factors, stimulates binding of mRNA and methionyl-tRNAi to the 40S ribosome. The eIF-3 complex specifically targets and initiates translation of a subset of mRNAs involved in cell proliferation. This subunit can bind 18S rRNA. This chain is Eukaryotic translation initiation factor 3 subunit G-1, found in Drosophila sechellia (Fruit fly).